The sequence spans 836 residues: ATP-binding cassette sub-family B member 6 (836 aa).

The Lumenal portion of the chain corresponds to 1-26 (MVTVGNYCEAEGPAGPAWTQNGLSPC). Positions 1–205 (MVTVGNYCEA…SGGLFILGLW (205 aa)) are required for the lysosomal targeting. Residues 1–236 (MVTVGNYCEA…RNQGRSTDPR (236 aa)) are required for ATPase activity. Cys-8 and Cys-26 form a disulfide bridge. The chain crosses the membrane as a helical span at residues 27–47 (FFYTLVPSTLMTLGVLALVLV). Residues 48 to 72 (LPCRRREVPAGTEELSWAAGPRVAP) lie on the Cytoplasmic side of the membrane. Residues 73-93 (YALQLSLAILQMALPLASLAG) traverse the membrane as a helical segment. The Lumenal portion of the chain corresponds to 94–106 (RVGTARGVRLPGY). Residues 107-127 (LLLASVLESLASACGLWLLVV) form a helical membrane-spanning segment. The Cytoplasmic portion of the chain corresponds to 128–147 (ERSQARQSLAMGVWMKFRHS). A helical membrane pass occupies residues 148–168 (LGLLLLWTVTFAAENLVLVSW). Residues 169–185 (NSPQWWWSRADLGQQVQ) are Lumenal-facing. The chain crosses the membrane as a helical span at residues 186–206 (FGLWVLRYMTSGGLFILGLWA). Topologically, residues 207 to 264 (PGLRPQSYTLHVNEEDQDGGRNQGRSTDPRSTWRDLGRKLRLLSGYLWPRGSPSLQLT) are cytoplasmic. Residues 265-285 (VLLCMGLMGLDRALNVLVPIF) traverse the membrane as a helical segment. The ABC transmembrane type-1 domain maps to 265 to 556 (VLLCMGLMGL…FGTYYRMIQT (292 aa)). At 286–305 (YRDIVNLLTSKAPWSSLAWT) the chain is on the lumenal side. The chain crosses the membrane as a helical span at residues 306-326 (VTTYVFLKFLQGGGTGSTGFV). Topologically, residues 327-375 (SNLRTFLWIRVQQFTSRGVELRLFSHLHELSLRWHLGRRTGEVLRIVDR) are cytoplasmic. The chain crosses the membrane as a helical span at residues 376–396 (GTSSVTGLLSYLVFNIIPTLA). Position 397 (Asp-397) is a topological domain, lumenal. The chain crosses the membrane as a helical span at residues 398–418 (IIIGIIYFSMFFNAWFGLIVF). At 419–499 (LCMSLYLILT…STASLVLLNQ (81 aa)) the chain is on the cytoplasmic side. Residues 500-520 (TQNMVIGFGLLAGSLLCAYFV) traverse the membrane as a helical segment. Residues 521–529 (SERRLQVGD) lie on the Lumenal side of the membrane. The helical transmembrane segment at 530–550 (FVLFGTYITQLYMPLNWFGTY) threads the bilayer. Residues 551–836 (YRMIQTNFID…QGQETVPEDS (286 aa)) lie on the Cytoplasmic side of the membrane. Positions 590–824 (VEFENVHFSY…GGVYAEMWQL (235 aa)) constitute an ABC transporter domain. Residues Tyr-599 and 623 to 634 (GPSGAGKSTILR) each bind ATP.

This sequence belongs to the ABC transporter superfamily. ABCB family. Heavy Metal importer (TC 3.A.1.210) subfamily. As to quaternary structure, homodimer. N-glycosylated. As to expression, ubiquitously expressed. Highly expressed in testis by meiotic pachytene spermatocytes and post-meiotic early spermatids.

It localises to the cell membrane. Its subcellular location is the mitochondrion outer membrane. The protein resides in the endoplasmic reticulum membrane. The protein localises to the golgi apparatus membrane. It is found in the endosome membrane. It localises to the lysosome membrane. Its subcellular location is the late endosome membrane. The protein resides in the early endosome membrane. The protein localises to the secreted. It is found in the extracellular exosome. It localises to the mitochondrion. Its subcellular location is the endosome. The protein resides in the multivesicular body membrane. The protein localises to the melanosome membrane. The enzyme catalyses heme b(in) + ATP + H2O = heme b(out) + ADP + phosphate + H(+). It catalyses the reaction coproporphyrin III(in) + ATP + H2O = coproporphyrin III(out) + ADP + phosphate + H(+). It carries out the reaction pheophorbide a(in) + ATP + H2O = pheophorbide a(out) + ADP + phosphate + H(+). The catalysed reaction is coproporphyrinogen III(in) + ATP + H2O = coproporphyrinogen III(out) + ADP + phosphate + H(+). The enzyme catalyses protoporphyrin IX(in) + ATP + H2O = protoporphyrin IX(out) + ADP + phosphate + H(+). It catalyses the reaction coproporphyrin I(in) + ATP + H2O = coproporphyrin I(out) + ADP + phosphate + H(+). It carries out the reaction uroporphyrin I(in) + ATP + H2O = uroporphyrin I(out) + ADP + phosphate + H(+). The catalysed reaction is uroporphyrin III(in) + ATP + H2O = uroporphyrin III(out) + ADP + phosphate + H(+). Functionally, ATP-dependent transporter that catalyzes the transport of a broad-spectrum of porphyrins from the cytoplasm to the extracellular space through the plasma membrane or into the vesicle lumen. May also function as an ATP-dependent importer of porphyrins from the cytoplasm into the mitochondria, in turn may participate in the de novo heme biosynthesis regulation and in the coordination of heme and iron homeostasis during phenylhydrazine stress. May play a key role in the early steps of melanogenesis producing PMEL amyloid fibrils. In vitro, it confers to cells a resistance to toxic metal such as arsenic and cadmium and against chemotherapeutics agent such as 5-fluorouracil, SN-38 and vincristin. In addition may play a role in the transition metal homeostasis. The sequence is that of ATP-binding cassette sub-family B member 6 from Rattus norvegicus (Rat).